The chain runs to 103 residues: uncharacterized protein (103 aa).

This is an uncharacterized protein from Escherichia coli (strain UTI89 / UPEC).